Reading from the N-terminus, the 249-residue chain is Adenylate kinase (249 aa).

ATP is bound at residue 43–48; the sequence is GAGKGT. The NMP stretch occupies residues 63–92; sequence ATGDMLRAQVAAKSALGVEAKKIMDQGGLV. AMP contacts are provided by residues threonine 64, arginine 69, 90–92, 119–122, and glutamine 126; these read GLV and GFPR. The segment at 160-197 is LID; it reads GRLVHPASGRSYHKLFNPPKKDMIDDVSGDALVQRSDD. Residues arginine 161 and 170-171 contribute to the ATP site; that span reads SY. Residues arginine 194 and arginine 205 each contribute to the AMP site. Glutamine 233 contacts ATP.

Belongs to the adenylate kinase family. AK2 subfamily. Monomer.

It is found in the cytoplasm. The protein resides in the cytosol. The protein localises to the mitochondrion intermembrane space. It carries out the reaction AMP + ATP = 2 ADP. Catalyzes the reversible transfer of the terminal phosphate group between ATP and AMP. Plays an important role in cellular energy homeostasis and in adenine nucleotide metabolism. Adenylate kinase activity is critical for regulation of the phosphate utilization and the AMP de novo biosynthesis pathways. The protein is Adenylate kinase of Debaryomyces hansenii (strain ATCC 36239 / CBS 767 / BCRC 21394 / JCM 1990 / NBRC 0083 / IGC 2968) (Yeast).